A 900-amino-acid polypeptide reads, in one-letter code: Phospholipase DDHD1 (900 aa).

Disordered stretches follow at residues 1–28 (MNYPGRGSPRSPEHNGRGGGGGAWELGS), 100–152 (LRYY…GGPA), and 202–233 (GARPQGGDRDGDHVCSPTGPASSSGEDDDEDR). Serine 8 and serine 11 each carry phosphoserine. The span at 130–140 (SGGGGATGGSP) shows a compositional bias: gly residues. Residue serine 537 is part of the active site. Residues 611 to 886 (LKFKVENFFC…ALFLLTFMYK (276 aa)) enclose the DDHD domain. 2 disordered regions span residues 706 to 725 (AKEPTSVSENEGISTIPSPV) and 768 to 801 (SSTTQSSETSKDSMEDEKKPVASPSATTVGTQTL). The span at 710–725 (TSVSENEGISTIPSPV) shows a compositional bias: polar residues. At serine 723 the chain carries Phosphoserine. Basic and acidic residues predominate over residues 776–787 (TSKDSMEDEKKP). A compositionally biased stretch (polar residues) spans 791–801 (PSATTVGTQTL).

It belongs to the PA-PLA1 family. In terms of assembly, forms homooligomers and, to a much smaller extent, heterooligomers with DDHD2. As to expression, highly expressed in testis. Also expressed in brain, spleen and lung. Only expressed in cerebellum in fetal brain.

Its subcellular location is the cytoplasm. It catalyses the reaction a 1,2-diacyl-sn-glycero-3-phosphate + H2O = a 2-acyl-sn-glycerol 3-phosphate + a fatty acid + H(+). The catalysed reaction is a 1,2-diacyl-sn-glycero-3-phospho-(1D-myo-inositol) + H2O = a 2-acyl-sn-glycero-3-phospho-D-myo-inositol + a fatty acid + H(+). It carries out the reaction 1-octadecanoyl-2-(5Z,8Z,11Z,14Z-eicosatetraenoyl)-sn-glycero-3-phospho-(1D-myo-inositol) + H2O = 2-(5Z,8Z,11Z,14Z-eicosatetraenoyl)-sn-glycero-3-phospho-(1D-myo-inositol) + octadecanoate + H(+). The enzyme catalyses a 1-acyl-2-(5Z,8Z,11Z,14Z-eicosatetraenoyl)-sn-glycero-3-phospho-(1D-myo-inositol) + H2O = 2-(5Z,8Z,11Z,14Z-eicosatetraenoyl)-sn-glycero-3-phospho-(1D-myo-inositol) + a fatty acid + H(+). It catalyses the reaction 1,2-dihexadecanoyl-sn-glycero-3-phospho-(1D-myo-inositol) + H2O = 2-hexadecanoyl-sn-glycero-3-phospho-(1D-myo-inositol) + hexadecanoate + H(+). The catalysed reaction is a 1-acyl-2-(5Z,8Z,11Z,14Z)-eicosatetraenoyl-sn-glycero-3-phosphate + H2O = 2-(5Z,8Z,11Z,14Z-eicosatetraenoyl)-sn-glycero-3-phosphate + a fatty acid + H(+). It carries out the reaction 1,2-di-(9Z-octadecenoyl)-sn-glycero-3-phosphate + H2O = 2-(9Z-octadecenoyl)-sn-glycero-3-phosphate + (9Z)-octadecenoate + H(+). The enzyme catalyses 1-hexadecanoyl-2-(9Z-octadecenoyl)-sn-glycero-3-phosphate + H2O = 2-(9Z-octadecenoyl)-sn-glycero-3-phosphate + hexadecanoate + H(+). It catalyses the reaction 1-hexadecanoyl-2-(9Z-octadecenoyl)-sn-glycero-3-phospho-L-serine + H2O = 2-(9Z-octadecenoyl)-sn-glycero-3-phospho-L-serine + hexadecanoate + H(+). The catalysed reaction is 1,2-di-(5Z,8Z,11Z,14Z)-eicosatetraenoyl-sn-glycero-3-phosphate + H2O = 2-(5Z,8Z,11Z,14Z-eicosatetraenoyl)-sn-glycero-3-phosphate + (5Z,8Z,11Z,14Z)-eicosatetraenoate + H(+). It carries out the reaction 1-octadecanoyl-2-(5Z,8Z,11Z,14Z-eicosatetraenoyl)-sn-glycero-3-phosphate + H2O = 2-(5Z,8Z,11Z,14Z-eicosatetraenoyl)-sn-glycero-3-phosphate + octadecanoate + H(+). The enzyme catalyses a 1,2-diacyl-sn-glycero-3-phosphocholine + H2O = a 2-acyl-sn-glycero-3-phosphocholine + a fatty acid + H(+). It catalyses the reaction a 1,2-diacyl-sn-glycero-3-phosphoethanolamine + H2O = a 2-acyl-sn-glycero-3-phosphoethanolamine + a fatty acid + H(+). The catalysed reaction is a 1,2-diacyl-sn-glycero-3-phospho-L-serine + H2O = a 2-acyl-sn-glycero-3-phospho-L-serine + a fatty acid + H(+). It carries out the reaction a 1,2-diacyl-sn-glycero-3-phospho-(1'-sn-glycerol) + H2O = 2-acyl-sn-glycero-3-phospho-(1'-sn-glycerol) + a fatty acid + H(+). The enzyme catalyses 1-hexadecanoyl-2-(9Z-octadecenoyl)-sn-glycero-3-phospho-(1'-sn-glycerol) + H2O = 2-(9Z-octadecenoyl)-sn-glycero-3-phospho-(1'-sn-glycerol) + hexadecanoate + H(+). It catalyses the reaction 1-acyl-2-(5Z,8Z,11Z,14Z-eicosatetraenoyl)-sn-glycero-3-phosphocholine + H2O = 2-(5Z,8Z,11Z,14Z)-eicosatetraenoyl-sn-glycero-3-phosphocholine + a fatty acid + H(+). The catalysed reaction is 1-acyl-2-(5Z,8Z,11Z,14Z)-eicosatetraenoyl-sn-glycero-3-phosphoethanolamine + H2O = 2-(5Z,8Z,11Z,14Z)-eicosatetraenoyl-sn-glycero-3-phosphoethanolamine + a fatty acid + H(+). It carries out the reaction 1-(9Z-octadecenoyl)-2-(7Z,10Z,13Z,16Z,19Z-docosapentaenoyl)-sn-glycero-3-phospho-1D-myo-inositol + H2O = 2-(7Z,10Z,13Z,16Z,19Z-docosapentaenoyl)-sn-glycero-3-phospho-1D-myo-inositol + (9Z)-octadecenoate + H(+). The enzyme catalyses 1-(9Z-octadecenoyl)-2-(5Z,8Z,11Z,14Z-eicosatetraenoyl)-sn-glycero-3-phospho-1D-myo-inositol + H2O = 2-(5Z,8Z,11Z,14Z-eicosatetraenoyl)-sn-glycero-3-phospho-(1D-myo-inositol) + (9Z)-octadecenoate + H(+). It catalyses the reaction 1,2-di-(9Z-octadecenoyl)-sn-glycero-3-phospho-1D-myo-inositol + H2O = 2-(9Z-octadecenoyl)-sn-glycero-3-phospho-1D-myo-inositol + (9Z)-octadecenoate + H(+). The catalysed reaction is 1-(9Z-octadecenoyl)-2-(8Z,11Z,14Z-eicosatrienoyl)-sn-glycero-3-phospho-1D-myo-inositol + H2O = 2-(8Z,11Z,14Z-eicosatrienoyl)-sn-glycero-3-phospho-1D-myo-inositol + (9Z)-octadecenoate + H(+). It carries out the reaction 1,2-di-(9Z-octadecenoyl)-sn-glycero-3-phosphocholine + H2O = (9Z-octadecenoyl)-sn-glycero-3-phosphocholine + (9Z)-octadecenoate + H(+). The protein operates within phospholipid metabolism; phosphatidylinositol metabolism. Its activity is regulated as follows. Phosphatidate (1,2-diacyl-sn-glycero-3-phosphate, PA) can positively regulate phospholipase A1 activity. Phospholipase A1 (PLA1) that hydrolyzes ester bonds at the sn-1 position of glycerophospholipids producing a free fatty acid and a lysophospholipid. Prefers phosphatidate (1,2-diacyl-sn-glycero-3-phosphate, PA) as substrate in vitro, but can efficiently hydrolyze phosphatidylinositol (1,2-diacyl-sn-glycero-3-phospho-(1D-myo-inositol), PI), as well as a range of other glycerophospholipid substrates such as phosphatidylcholine (1,2-diacyl-sn-glycero-3-phosphocholine, PC), phosphatidylethanolamine (1,2-diacyl-sn-glycero-3-phosphoethanolamine, PE), phosphatidylserine (1,2-diacyl-sn-glycero-3-phospho-L-serine, PS) and phosphatidylglycerol (1,2-diacyl-sn-glycero-3-phospho-(1'-sn-glycerol), PG). Involved in the regulation of the endogenous content of polyunsaturated PI and PS lipids in the nervous system. Changes in these lipids extend to downstream metabolic products like PI phosphates PIP and PIP2, which play fundamental roles in cell biology. Regulates mitochondrial morphology. These dynamic changes may be due to PA hydrolysis at the mitochondrial surface. May play a regulatory role in spermatogenesis or sperm function. This Homo sapiens (Human) protein is Phospholipase DDHD1.